The following is a 394-amino-acid chain: ATP phosphoribosyltransferase regulatory subunit (394 aa).

This sequence belongs to the class-II aminoacyl-tRNA synthetase family. HisZ subfamily. As to quaternary structure, heteromultimer composed of HisG and HisZ subunits.

The protein localises to the cytoplasm. It functions in the pathway amino-acid biosynthesis; L-histidine biosynthesis; L-histidine from 5-phospho-alpha-D-ribose 1-diphosphate: step 1/9. In terms of biological role, required for the first step of histidine biosynthesis. May allow the feedback regulation of ATP phosphoribosyltransferase activity by histidine. The chain is ATP phosphoribosyltransferase regulatory subunit from Saccharophagus degradans (strain 2-40 / ATCC 43961 / DSM 17024).